We begin with the raw amino-acid sequence, 310 residues long: MSTPGAQEVLFRTGIAAVNSTNHLRVYFQDSHGSIRESLYESGWANGTAKNVIAKAKLGTPLAATSKELKNIRVYSLTEDNVLQEAAYDSGSGWYNGALAGAKFTVAPYSRIGSVFLAGTNALQLRIYAQKTDNTIQEYMWNGDGWKEGTNLGVALPGTGIGVTCWRYTDYDGPSIRVWFQTDNLKLVQRAYDPHTGWFKELTTIFDKAPPRCAIAATNFNPGKSSIYMRIYFVNSDNTIWQVCWDHGQGYHDKRTITPVIQGSEIAIISWEGPELRLYFQNGTYVSAISEWSWARHGSQLGRRALPPAE.

Repeat copies occupy residues Met-1 to Ile-53, Ala-54 to Lys-103, Phe-104 to Asn-151, Leu-152 to Ala-209, Pro-210 to Thr-256, and Ile-257 to Glu-310. The segment at Met-1 to Glu-310 is 6 X approximate tandem repeats. Beta-L-fucose contacts are provided by Arg-25, Glu-37, Trp-44, Arg-73, Glu-85, Trp-94, Arg-126, Glu-138, Trp-146, Arg-177, Gln-189, Trp-198, Arg-230, Gln-242, Arg-277, and Glu-291.

The protein belongs to the fungal fucose-specific lectin family.

Lectin that specifically binds to L-fucose and weakly reacts with mannose and N-acetyl-neuraminic acid. Has strongest preference for the alpha-1,6-fucosylated chain (core fucose) on glycoproteins among alpha-1,2-, alpha-1,3-, alpha-1,4-, and alpha-1,6-fucosylated chains. Binds to fucose residues of IgE in mice and human, causing antigen-independent IgE-mediated mast cell activation and anaphylactoid reactions in mice and is possibly implicated in allergic response to Aspergillus oryzae in humans. Induces secretion of pro-inflammatory cytokines IL6 and IL8 implicated in ocular diseases such as mycotic keratitis, probably through its interaction with host toll-like receptors TLR2 and TLR4, followed by up-regulation of pro-inflammatory cytokines. The sequence is that of Fucose-specific lectin from Aspergillus oryzae (Yellow koji mold).